Consider the following 306-residue polypeptide: UDP-3-O-acyl-N-acetylglucosamine deacetylase (306 aa).

Zn(2+) contacts are provided by histidine 79, histidine 238, and aspartate 242. Histidine 265 functions as the Proton donor in the catalytic mechanism.

The protein belongs to the LpxC family. Zn(2+) serves as cofactor.

The catalysed reaction is a UDP-3-O-[(3R)-3-hydroxyacyl]-N-acetyl-alpha-D-glucosamine + H2O = a UDP-3-O-[(3R)-3-hydroxyacyl]-alpha-D-glucosamine + acetate. Its pathway is glycolipid biosynthesis; lipid IV(A) biosynthesis; lipid IV(A) from (3R)-3-hydroxytetradecanoyl-[acyl-carrier-protein] and UDP-N-acetyl-alpha-D-glucosamine: step 2/6. In terms of biological role, catalyzes the hydrolysis of UDP-3-O-myristoyl-N-acetylglucosamine to form UDP-3-O-myristoylglucosamine and acetate, the committed step in lipid A biosynthesis. This chain is UDP-3-O-acyl-N-acetylglucosamine deacetylase, found in Shewanella pealeana (strain ATCC 700345 / ANG-SQ1).